Reading from the N-terminus, the 380-residue chain is Septin homolog spn4 (380 aa).

The region spanning 25–298 (NGVAFTLMLC…EQYRQEQMKV (274 aa)) is the Septin-type G domain. The segment at 35-42 (GESGLGKT) is G1 motif. GTP-binding positions include 35–42 (GESGLGKT), T70, G96, 175–183 (KADMYTRRD), G231, and R247. The interval 93-96 (DTPG) is G3 motif. The tract at residues 174 to 177 (AKAD) is G4 motif.

This sequence belongs to the TRAFAC class TrmE-Era-EngA-EngB-Septin-like GTPase superfamily. Septin GTPase family. Component of the septin complex composed of two copies of each spn1, spn2, spn3 and spn4.

It localises to the cytoplasm. The protein localises to the cell cortex. Plays a role in the cell cycle. Involved in a late stage of septum formation leading to the separation of the daughter cells. This Schizosaccharomyces pombe (strain 972 / ATCC 24843) (Fission yeast) protein is Septin homolog spn4 (spn4).